A 298-amino-acid chain; its full sequence is Acetyl-coenzyme A carboxylase carboxyl transferase subunit beta 1 (298 aa).

In terms of domain architecture, CoA carboxyltransferase N-terminal spans 26–294 (MWVKCPSCGD…RAADVQNAPA (269 aa)). Zn(2+)-binding residues include C30, C33, C49, and C51. The C4-type zinc finger occupies 30–51 (CPSCGDLIYTRQFSDNLKVCKC).

This sequence belongs to the AccD/PCCB family. Acetyl-CoA carboxylase is a heterohexamer composed of biotin carboxyl carrier protein (AccB), biotin carboxylase (AccC) and two subunits each of ACCase subunit alpha (AccA) and ACCase subunit beta (AccD). It depends on Zn(2+) as a cofactor.

The protein localises to the cytoplasm. The enzyme catalyses N(6)-carboxybiotinyl-L-lysyl-[protein] + acetyl-CoA = N(6)-biotinyl-L-lysyl-[protein] + malonyl-CoA. It functions in the pathway lipid metabolism; malonyl-CoA biosynthesis; malonyl-CoA from acetyl-CoA: step 1/1. Component of the acetyl coenzyme A carboxylase (ACC) complex. Biotin carboxylase (BC) catalyzes the carboxylation of biotin on its carrier protein (BCCP) and then the CO(2) group is transferred by the transcarboxylase to acetyl-CoA to form malonyl-CoA. This Roseiflexus castenholzii (strain DSM 13941 / HLO8) protein is Acetyl-coenzyme A carboxylase carboxyl transferase subunit beta 1.